A 435-amino-acid polypeptide reads, in one-letter code: MANFDLTRINCQFLDRHLTFPLLEFLCGKEIYNQQELLEYILETVNKTNMIDYTMDTRKRLNLSQEMPEELVQRKAEVLATLKQLQNEVAPIMKATDILKNGESMKDSKTFVNALQKDYNFKVEHLESAYKLAKYLYECGNYQESTSYLYFCLIVMSPNDKNYLNVLWGKLAAEILTLNWNTALEDLTRLRDYIDNANFSTIQALQQRTWLIHWSVLVFFNHPKGRDLIIEMFLYKPLYLNAIQTMCPHIMRYLATAVVINRTRRNALKDLIKVIQQESYTYRDPITEFLECLYVNFDFEGARLKLHECQTVILNDFFIVACLNEFVEDARLMIFETFCRIHQCITISMLADKLNMKPNEAECWIVNLIRNARLNAKIDSKLGHVVMGTQPLSPYQQLVEKIDSLSMRSEHLAGLIERKSKQKQNQESADSWKYY.

The PCI domain maps to 219–392; sequence FFNHPKGRDL…GHVVMGTQPL (174 aa).

It belongs to the eIF-3 subunit E family. Component of the eukaryotic translation initiation factor 3 (eIF-3) complex. The eIF-3 complex interacts with pix. Interacts with mxt. In terms of tissue distribution, expression levels in females and males are relatively similar 10 days after oviposition, however by day 15 expression is higher in gravid females than in males (at protein level).

The protein localises to the cytoplasm. Its subcellular location is the microsome. The protein resides in the endoplasmic reticulum. Its function is as follows. Component of the eukaryotic translation initiation factor 3 (eIF-3) complex, which is involved in protein synthesis of a specialized repertoire of mRNAs and, together with other initiation factors, stimulates binding of mRNA and methionyl-tRNAi to the 40S ribosome. The eIF-3 complex specifically targets and initiates translation of a subset of mRNAs involved in cell proliferation. In addition to its role in the eIF-3 complex, also functions in protein ubiquitination and degradation. During mitosis required for regulating mitotic microtubule growth and kinetochore formation, and consequently is required for satisfying the spindle assembly checkpoint (SAC) during metaphase to prevent delays in mitotic progression. This is likely by promoting the ubiquitination and degradation of Klp67A, a kinesin-like protein that suppresses microtubule polymerization at plus ends. Acts in the COP9 signalosome (CSN) mediated regulation of cullin neddylation by promoting Cul1 and Cul3 neddylation and negatively regulating the CSN complex subunit CSN5. The chain is Eukaryotic translation initiation factor 3 subunit E from Drosophila melanogaster (Fruit fly).